A 287-amino-acid polypeptide reads, in one-letter code: Sulfofructosephosphate aldolase (287 aa).

The active-site Proton donor is Asp-82. Zn(2+)-binding residues include His-83 and His-180. Dihydroxyacetone phosphate is bound at residue Gly-181. His-208 is a Zn(2+) binding site. Dihydroxyacetone phosphate is bound by residues 209 to 211 (GGS) and 230 to 233 (NVDT).

It belongs to the class II fructose-bisphosphate aldolase family. Zn(2+) serves as cofactor.

It catalyses the reaction 6-deoxy-6-sulfo-D-fructose 1-phosphate = (2S)-3-sulfolactaldehyde + dihydroxyacetone phosphate. Functionally, part of the sulfo-EMP2 pathway, a D-sulfoquinovose degradation pathway that produces sulfolactate (SL). Cleaves 6-deoxy-6-sulfo-D-fructose 1-phosphate (SFP) to form dihydroxyacetone phosphate (DHAP) and 3-sulfolactaldehyde (SLA). The chain is Sulfofructosephosphate aldolase from Alkalicoccus urumqiensis (Bacillus urumqiensis).